Here is a 45-residue protein sequence, read N- to C-terminus: Photosystem II reaction center protein K (45 aa).

The propeptide occupies 1 to 8 (METALLLA). Residues 24–44 (LPLIPLFFLLLAFVWQASVGF) form a helical membrane-spanning segment.

Belongs to the PsbK family. In terms of assembly, PSII is composed of 1 copy each of membrane proteins PsbA, PsbB, PsbC, PsbD, PsbE, PsbF, PsbH, PsbI, PsbJ, PsbK, PsbL, PsbM, PsbT, PsbX, PsbY, PsbZ, Psb30/Ycf12, peripheral proteins PsbO, CyanoQ (PsbQ), PsbU, PsbV and a large number of cofactors. It forms dimeric complexes.

The protein resides in the cellular thylakoid membrane. One of the components of the core complex of photosystem II (PSII). PSII is a light-driven water:plastoquinone oxidoreductase that uses light energy to abstract electrons from H(2)O, generating O(2) and a proton gradient subsequently used for ATP formation. It consists of a core antenna complex that captures photons, and an electron transfer chain that converts photonic excitation into a charge separation. This chain is Photosystem II reaction center protein K, found in Microcystis aeruginosa (strain NIES-843 / IAM M-2473).